We begin with the raw amino-acid sequence, 969 residues long: MDGKPQVEVIVNGQVVPNLDDREYRLIKLENDLEVLLVRDPETDNASAAIDVHIGSQSNPRELLGLAHFCEHLLFMGTKKYPDENEYRKYLESHNGISNAYTASNNTNYYFEVSHDALYGALDRFAQFFIDPLFLEECKDREIRAVDSEHCKNLQSDSWRFWRLYSVLSNPKSVFSKFNTGNIETLGDVPKELGLDVRQELLKFYDKYYSANIMKLVIIGREPLDVLQDWAAELFSPIKNKAVPIPKFPDPPYTDNEVRKICYVKPVKNLRRLDIVFPIPGQYHKYKCRPAEYVCHLLGHEGEGSYLAYLKSLGLATSLIAFNVSITEDADIIVVSTFLTEEGLTDYQRVIKILFEYIRLLDQTNAHKFLFEETRIMSEAQFKTRQKTPAYQYAHVVASKLQREYPRDKVLYYSSVLTEFDPKGIQEVVESLRPNNFFAILAAHSIEKGLDNKEKFYGIDYGLEDLDSQFIDSLLHIKTSSELYLPLANEFIPWSLEVEKQPVTTKLKVPNLVRNDKFVRLWHKKDDTFWVPKANVFINFISPIARRSPKVSVSTTLYTRLIEDALGEYSYPASLAGLSFSLSPSTRGIILCISGFTDKLHVLLEKVVAMMRDLKVHPQRFEILKNRLEQELKDYDALEAYHRSNHVLTWLSEPHSWSNAELREAIKDVQVGDMSDFISDLLKQNFLESLVHGNYTEEDAKNLIESAQKLIDPKPVFASQLSRKRAIIVPEGGNYIYKTVVPNKEEKNSAIMYNLQISQLDDERSGALTRLARQIMKEPTFSILRTKEQLGYIVFTLVRQVTPFINLNIFVQSERSSTYLESRIRALLDQFKSEFLEMSDEDFSKHKSSLINFMLEKHTNLKEESSMYWLRICDGFYDFTRLEKQAEIVSTITKDEFYSFFINNIHYEGENTKKISVHVVSQRCEDEVYEIPNVTIIENGNMFKESMTLSKAAFPLKPFDEIDRSLLFN.

His68 contributes to the Zn(2+) binding site. Glu71 functions as the Proton acceptor in the catalytic mechanism. Zn(2+)-binding residues include His72 and Glu149.

Belongs to the peptidase M16 family.

The protein resides in the cytoplasm. Functionally, has a role in meiosis. This Schizosaccharomyces pombe (strain 972 / ATCC 24843) (Fission yeast) protein is Putative zinc protease mug138 (mug138).